The primary structure comprises 767 residues: Pre-mRNA-splicing factor ATP-dependent RNA helicase PRP43 (767 aa).

Residues 1-74 (MGSKRRFSSE…KLEDGKINPF (74 aa)) are disordered. 2 positions are modified to phosphoserine: Ser8 and Ser9. Positions 58–70 (TSAEEAQKLEDGK) are enriched in basic and acidic residues. Residues 103–268 (LKLYQNNQIM…FNDAPLLAVP (166 aa)) form the Helicase ATP-binding domain. Residue 116–123 (GETGSGKT) participates in ATP binding. Residues 215-218 (DEAH) carry the DEAH box motif. The 181-residue stretch at 293-473 (TVLQIHATEE…STVLELKKLG (181 aa)) folds into the Helicase C-terminal domain.

Belongs to the DEAD box helicase family. DEAH subfamily. DDX15/PRP43 sub-subfamily. Component of the NTR complex (NTC-related complex), composed of NTR1, NTR2 and PRP43. Interacts with NTR1 and NTR2. Interacts with SPP382.

Its subcellular location is the nucleus. It catalyses the reaction ATP + H2O = ADP + phosphate + H(+). Its function is as follows. Pre-mRNA processing factor involved in disassembly of spliceosomes after the release of mature mRNA. In Saccharomyces cerevisiae (strain ATCC 204508 / S288c) (Baker's yeast), this protein is Pre-mRNA-splicing factor ATP-dependent RNA helicase PRP43 (PRP43).